Consider the following 634-residue polypeptide: DNA-directed RNA polymerase subunit gamma (634 aa).

Residues C74, C76, C89, and C92 each contribute to the Zn(2+) site. Mg(2+) contacts are provided by D471, D473, and D475.

It belongs to the RNA polymerase beta' chain family. RpoC1 subfamily. In cyanobacteria the RNAP catalytic core is composed of 2 alpha, 1 beta, 1 beta', 1 gamma and 1 omega subunit. When a sigma factor is associated with the core the holoenzyme is formed, which can initiate transcription. It depends on Mg(2+) as a cofactor. Requires Zn(2+) as cofactor.

The catalysed reaction is RNA(n) + a ribonucleoside 5'-triphosphate = RNA(n+1) + diphosphate. Functionally, DNA-dependent RNA polymerase catalyzes the transcription of DNA into RNA using the four ribonucleoside triphosphates as substrates. This is DNA-directed RNA polymerase subunit gamma from Synechococcus sp. (strain CC9902).